Consider the following 154-residue polypeptide: Large ribosomal subunit protein uL22 (154 aa).

The protein belongs to the universal ribosomal protein uL22 family. In terms of assembly, part of the 50S ribosomal subunit.

In terms of biological role, this protein binds specifically to 23S rRNA. It makes multiple contacts with different domains of the 23S rRNA in the assembled 50S subunit and ribosome. Its function is as follows. The globular domain of the protein is located near the polypeptide exit tunnel on the outside of the subunit, while an extended beta-hairpin is found that lines the wall of the exit tunnel in the center of the 70S ribosome. This is Large ribosomal subunit protein uL22 from Natronomonas pharaonis (strain ATCC 35678 / DSM 2160 / CIP 103997 / JCM 8858 / NBRC 14720 / NCIMB 2260 / Gabara) (Halobacterium pharaonis).